A 418-amino-acid polypeptide reads, in one-letter code: Glutamyl-tRNA reductase (418 aa).

Residues Thr-49–Arg-52, Ser-109, Glu-114–Gln-116, and Gln-120 contribute to the substrate site. Cys-50 functions as the Nucleophile in the catalytic mechanism. Gly-189–Ile-194 contacts NADP(+).

Belongs to the glutamyl-tRNA reductase family. Homodimer.

It carries out the reaction (S)-4-amino-5-oxopentanoate + tRNA(Glu) + NADP(+) = L-glutamyl-tRNA(Glu) + NADPH + H(+). Its pathway is porphyrin-containing compound metabolism; protoporphyrin-IX biosynthesis; 5-aminolevulinate from L-glutamyl-tRNA(Glu): step 1/2. In terms of biological role, catalyzes the NADPH-dependent reduction of glutamyl-tRNA(Glu) to glutamate 1-semialdehyde (GSA). The sequence is that of Glutamyl-tRNA reductase from Salmonella choleraesuis (strain SC-B67).